The sequence spans 454 residues: Phosphoglucosamine mutase (454 aa).

Serine 101 acts as the Phosphoserine intermediate in catalysis. Positions 101, 243, 245, and 247 each coordinate Mg(2+). The residue at position 101 (serine 101) is a Phosphoserine.

The protein belongs to the phosphohexose mutase family. Mg(2+) is required as a cofactor. Activated by phosphorylation.

It catalyses the reaction alpha-D-glucosamine 1-phosphate = D-glucosamine 6-phosphate. In terms of biological role, catalyzes the conversion of glucosamine-6-phosphate to glucosamine-1-phosphate. This is Phosphoglucosamine mutase from Geotalea daltonii (strain DSM 22248 / JCM 15807 / FRC-32) (Geobacter daltonii).